The following is a 118-amino-acid chain: uncharacterized protein (118 aa).

The HTH hxlR-type domain occupies 6 to 104 (CGFEVTKEVI…WGGYYAEQEY (99 aa)).

This is an uncharacterized protein from Bacillus subtilis (strain 168).